The following is a 197-amino-acid chain: Protocatechuate 3,4-dioxygenase alpha chain (197 aa).

R130 is a 3,4-dihydroxybenzoate binding site.

Belongs to the intradiol ring-cleavage dioxygenase family. The enzyme is an oligomer of 12 copies of the alpha and beta chains. The cofactor is Fe(3+).

The enzyme catalyses 3,4-dihydroxybenzoate + O2 = 3-carboxy-cis,cis-muconate + 2 H(+). It participates in aromatic compound metabolism; beta-ketoadipate pathway; 3-carboxy-cis,cis-muconate from 3,4-dihydroxybenzoate: step 1/1. Its function is as follows. Plays an essential role in the utilization of numerous aromatic and hydroaromatic compounds via the beta-ketoadipate pathway. In Burkholderia cepacia (Pseudomonas cepacia), this protein is Protocatechuate 3,4-dioxygenase alpha chain (pcaG).